Consider the following 489-residue polypeptide: Argininosuccinate lyase (489 aa).

The interval 1-20 (MSEPSAAVGQRPGGESAPAH) is disordered.

Belongs to the lyase 1 family. Argininosuccinate lyase subfamily.

It is found in the cytoplasm. The catalysed reaction is 2-(N(omega)-L-arginino)succinate = fumarate + L-arginine. Its pathway is amino-acid biosynthesis; L-arginine biosynthesis; L-arginine from L-ornithine and carbamoyl phosphate: step 3/3. The protein is Argininosuccinate lyase of Acidothermus cellulolyticus (strain ATCC 43068 / DSM 8971 / 11B).